The sequence spans 91 residues: Large ribosomal subunit protein uL23 (91 aa).

The protein belongs to the universal ribosomal protein uL23 family. In terms of assembly, part of the 50S ribosomal subunit. Contacts protein L29, and trigger factor when it is bound to the ribosome.

In terms of biological role, one of the early assembly proteins it binds 23S rRNA. One of the proteins that surrounds the polypeptide exit tunnel on the outside of the ribosome. Forms the main docking site for trigger factor binding to the ribosome. This is Large ribosomal subunit protein uL23 from Staphylococcus epidermidis (strain ATCC 35984 / DSM 28319 / BCRC 17069 / CCUG 31568 / BM 3577 / RP62A).